Reading from the N-terminus, the 251-residue chain is uncharacterized protein (251 aa).

This is an uncharacterized protein from Mycoplasma genitalium (strain ATCC 33530 / DSM 19775 / NCTC 10195 / G37) (Mycoplasmoides genitalium).